The following is a 121-amino-acid chain: Flagellar protein FliT (121 aa).

The required for homodimerization stretch occupies residues 1-50 (MNHAPHLYFAWQQLVEKSQLMLRLATEEQWDELIASEMAYVNAVQEIAHL). The segment at 60–98 (MQEQLRPMLRLILDNESKVKQLLQIRMDELAKLVGQSSV) is fliD binding.

Belongs to the FliT family. As to quaternary structure, homodimer. Interacts with FliD and FlhC.

It localises to the cytoplasm. Its subcellular location is the cytosol. Its function is as follows. Dual-function protein that regulates the transcription of class 2 flagellar operons and that also acts as an export chaperone for the filament-capping protein FliD. As a transcriptional regulator, acts as an anti-FlhDC factor; it directly binds FlhC, thus inhibiting the binding of the FlhC/FlhD complex to class 2 promoters, resulting in decreased expression of class 2 flagellar operons. As a chaperone, effects FliD transition to the membrane by preventing its premature polymerization, and by directing it to the export apparatus. The polypeptide is Flagellar protein FliT (Escherichia coli O8 (strain IAI1)).